Consider the following 143-residue polypeptide: Transcriptional regulator MraZ (143 aa).

2 consecutive SpoVT-AbrB domains span residues 5-47 and 76-119; these read SHTP…PMAE and AADD…DAQR.

It belongs to the MraZ family. In terms of assembly, forms oligomers.

It is found in the cytoplasm. Its subcellular location is the nucleoid. This is Transcriptional regulator MraZ from Frankia alni (strain DSM 45986 / CECT 9034 / ACN14a).